The primary structure comprises 273 residues: HTH-type transcriptional activator RhaS (273 aa).

One can recognise an HTH araC/xylS-type domain in the interval 174-272 (YQLLDWLQNN…SQSPRDLRSQ (99 aa)). 2 consecutive DNA-binding regions (H-T-H motif) follow at residues 191–212 (PELA…KNKT) and 239–262 (VTDI…KREF).

Binds DNA as a dimer.

It is found in the cytoplasm. Activates expression of the rhaBAD and rhaT operons. The chain is HTH-type transcriptional activator RhaS from Yersinia pestis bv. Antiqua (strain Antiqua).